The following is a 940-amino-acid chain: Beta-mannosidase A (940 aa).

A signal peptide spans 1 to 21 (MHFHGIATQAVLASNITTGSG). 7 N-linked (GlcNAc...) asparagine glycosylation sites follow: N15, N39, N79, N245, N314, N321, and N344. E476 serves as the catalytic Proton donor. N534, N605, N626, N653, N733, N761, and N785 each carry an N-linked (GlcNAc...) asparagine glycan.

This sequence belongs to the glycosyl hydrolase 2 family. Beta-mannosidase A subfamily. In terms of assembly, homodimer.

It is found in the secreted. It catalyses the reaction Hydrolysis of terminal, non-reducing beta-D-mannose residues in beta-D-mannosides.. It functions in the pathway glycan metabolism; N-glycan degradation. Exoglycosidase that cleaves the single beta-linked mannose residue from the non-reducing end of beta-mannosidic oligosaccharides of various complexity and length. Involved in the degradation of polymeric mannan and galactomannan. The polypeptide is Beta-mannosidase A (mndA) (Emericella nidulans (strain FGSC A4 / ATCC 38163 / CBS 112.46 / NRRL 194 / M139) (Aspergillus nidulans)).